The following is a 258-amino-acid chain: tRNA pseudouridine synthase A (258 aa).

Residue Asp-52 is the Nucleophile of the active site. Tyr-110 contacts substrate.

The protein belongs to the tRNA pseudouridine synthase TruA family. As to quaternary structure, homodimer.

It catalyses the reaction uridine(38/39/40) in tRNA = pseudouridine(38/39/40) in tRNA. Formation of pseudouridine at positions 38, 39 and 40 in the anticodon stem and loop of transfer RNAs. This Francisella tularensis subsp. holarctica (strain FTNF002-00 / FTA) protein is tRNA pseudouridine synthase A.